A 493-amino-acid chain; its full sequence is Phenmedipham hydrolase (493 aa).

Ser188 functions as the Acyl-ester intermediate in the catalytic mechanism. Residues Glu307 and His402 each act as charge relay system in the active site.

The protein belongs to the type-B carboxylesterase/lipase family. Monomer.

In terms of biological role, may degrade the phenylcarbamate herbicides phenmedipham and desmedipham cometabolically by hydrolyzing their central carbamate linkages. Conveys resistance to the herbicide phenmedipham. In Pseudarthrobacter oxydans (Arthrobacter oxydans), this protein is Phenmedipham hydrolase (pcd).